A 264-amino-acid chain; its full sequence is Ribosomal protein L11 methyltransferase (264 aa).

S-adenosyl-L-methionine is bound by residues T116, G137, D159, and N200.

It belongs to the methyltransferase superfamily. PrmA family.

It localises to the cytoplasm. It carries out the reaction L-lysyl-[protein] + 3 S-adenosyl-L-methionine = N(6),N(6),N(6)-trimethyl-L-lysyl-[protein] + 3 S-adenosyl-L-homocysteine + 3 H(+). In terms of biological role, methylates ribosomal protein L11. The protein is Ribosomal protein L11 methyltransferase of Thermotoga neapolitana.